The primary structure comprises 72 residues: Exodeoxyribonuclease 7 small subunit (72 aa).

It belongs to the XseB family. As to quaternary structure, heterooligomer composed of large and small subunits.

The protein resides in the cytoplasm. The enzyme catalyses Exonucleolytic cleavage in either 5'- to 3'- or 3'- to 5'-direction to yield nucleoside 5'-phosphates.. In terms of biological role, bidirectionally degrades single-stranded DNA into large acid-insoluble oligonucleotides, which are then degraded further into small acid-soluble oligonucleotides. This Clostridium kluyveri (strain NBRC 12016) protein is Exodeoxyribonuclease 7 small subunit.